Reading from the N-terminus, the 306-residue chain is D-alanine--D-alanine ligase (306 aa).

Residues 107-300 (KEAYRAAGLP…FGQLCAWMVE (194 aa)) enclose the ATP-grasp domain. 134-184 (MQPPYVVKPYNEGSSVGVYIVTEAANGPPVLAPDLPATLMVEEYVPGRELS) provides a ligand contact to ATP. Mg(2+) contacts are provided by D251, E267, and N269.

It belongs to the D-alanine--D-alanine ligase family. The cofactor is Mg(2+). Mn(2+) serves as cofactor.

Its subcellular location is the cytoplasm. It catalyses the reaction 2 D-alanine + ATP = D-alanyl-D-alanine + ADP + phosphate + H(+). It participates in cell wall biogenesis; peptidoglycan biosynthesis. Cell wall formation. The protein is D-alanine--D-alanine ligase of Ruegeria pomeroyi (strain ATCC 700808 / DSM 15171 / DSS-3) (Silicibacter pomeroyi).